The primary structure comprises 302 residues: MADTIFSSGNDQWVCPNDRQLALRAKLQTGWSVHTYQTEKQRRTQCLSPGEVEVILQVIQRAERLDILEQQRIGRLVERLETMQKNVMGNGVSQCLLCGEMLGFLGSSSVFCKDCRKKVCTKCGIEASPGQKRPLWLCKICSEQREVWKRSGAWFYKGLPKYILPLKTPGRADDPHFRPLPVEPTEPQPQSAEVSRVYTWARGRVVSSDSDSDSDLSSSSLEDRPMPSGIKGTKYDKPRGDSGGSMESPRMGPARPPSHLSGSQSSLGSETGAGATDPQGGTLPRPEPRVSGKRHTWATTHY.

Positions 41–158 constitute a RabBD domain; that stretch reads QRRTQCLSPG…KRSGAWFYKG (118 aa). The segment at 89–146 adopts an FYVE-type zinc-finger fold; it reads GNGVSQCLLCGEMLGFLGSSSVFCKDCRKKVCTKCGIEASPGQKRPLWLCKICSEQRE. 8 residues coordinate Zn(2+): cysteine 95, cysteine 98, cysteine 112, cysteine 115, cysteine 120, cysteine 123, cysteine 138, and cysteine 141. Disordered regions lie at residues 174-194 and 206-302; these read DPHF…SAEV and VSSD…TTHY. Residue serine 248 is modified to Phosphoserine. The span at 258-269 shows a compositional bias: low complexity; it reads SHLSGSQSSLGS.

As to quaternary structure, recruited to dense-core vesicles through specific interaction with RAB27A in endocrine cells. Interacts with RAB3A, RAB3B, RAB3C and RAB3D. Interacts with ZYX. In terms of tissue distribution, highly expressed in pancreatic islets and parotid. High to moderate expression in adrenal gland, pituitary gland and ovary.

The protein resides in the cytoplasm. The protein localises to the cytoplasmic vesicle. It is found in the secretory vesicle membrane. In terms of biological role, rab GTPase effector involved in the late steps of regulated exocytosis, both in endocrine and exocrine cells. Regulates the exocytosis of dense-core vesicles in neuroendocrine cells through interaction with RAB27A. Acts as a potential RAB3B effector protein in epithelial cells. The sequence is that of Rab effector Noc2 (Rph3al) from Rattus norvegicus (Rat).